A 288-amino-acid polypeptide reads, in one-letter code: Beta-lactamase PSE-1 (288 aa).

An N-terminal signal peptide occupies residues 1 to 17 (MKFLLAFSLLIPSVVFA). Catalysis depends on Ser65, which acts as the Acyl-ester intermediate. Residues Cys72 and Cys118 are joined by a disulfide bond. A substrate-binding site is contributed by 229–231 (RSG).

This sequence belongs to the class-A beta-lactamase family. Monomer.

The catalysed reaction is a beta-lactam + H2O = a substituted beta-amino acid. Inhibited by p-chloromercuribenzoate but not by cloxacillin. Its function is as follows. Hydrolyzes penicillin, ampicillin and carbenicillin but not other antibiotics including oxacillin, methicillin and cloxacillin. This is Beta-lactamase PSE-1 from Pseudomonas aeruginosa.